The sequence spans 229 residues: Potassium/proton antiporter CemA (229 aa).

The next 2 membrane-spanning stretches (helical) occupy residues Ile-114–Leu-134 and Ile-189–Ile-209.

It belongs to the CemA family.

It localises to the plastid. The protein resides in the chloroplast inner membrane. It carries out the reaction K(+)(in) + H(+)(out) = K(+)(out) + H(+)(in). Contributes to K(+)/H(+) antiport activity by supporting proton efflux to control proton extrusion and homeostasis in chloroplasts in a light-dependent manner to modulate photosynthesis. Prevents excessive induction of non-photochemical quenching (NPQ) under continuous-light conditions. Indirectly promotes efficient inorganic carbon uptake into chloroplasts. The protein is Potassium/proton antiporter CemA of Lotus japonicus (Lotus corniculatus var. japonicus).